Reading from the N-terminus, the 517-residue chain is Pentatricopeptide repeat-containing protein At5g42450, mitochondrial (517 aa).

The N-terminal 23 residues, 1–23, are a transit peptide targeting the mitochondrion; sequence MLHMILSQRVILLRKYHSSANAL. PPR repeat units lie at residues 57-91, 92-126, 127-157, 158-188, 189-223, 225-259, 261-291, 294-329, and 368-398; these read DVISATAVIGRFVKESRHVEASQAFKRLLCLGIRP, NEFTFGTVIGSSTTSRDVKLGKQLHCYALKMGLAS, NVFVGSAVLNCYVKLSTLTDARRCFDDTRDP, NVVSITNLISGYLKKHEFEEALSLFRAMPER, SVVTWNAVIGGFSQTGRNEEAVNTFVDMLREGVVI, NESTFPCAITAISNIASHGAGKSIHACAIKFLGKR, NVFVWNSLISFYSKCGNMEDSLLAFNKLEEE, NIVSWNSMIWGYAHNGRGEEAVAMFEKMVKDTNLRP, and ELEHYACMVDMLSRSGRFKEAEELIKSMPLD. Positions 403–478 are type E motif; sequence FWKALLGGCQ…FTGCSWIEVR (76 aa). The interval 479–509 is type E(+) motif; the sequence is DQIRVFVNADKNNELKDEVYRMLALVSQHLE.

This sequence belongs to the PPR family. PCMP-E subfamily.

The protein localises to the mitochondrion. The chain is Pentatricopeptide repeat-containing protein At5g42450, mitochondrial (PCMP-E102) from Arabidopsis thaliana (Mouse-ear cress).